A 446-amino-acid polypeptide reads, in one-letter code: GTPase Der (446 aa).

2 EngA-type G domains span residues 2-166 (TVVA…PEAP) and 179-354 (IRVS…RQYN). GTP-binding positions include 8-15 (GRPNVGKS), 55-59 (DTAGF), 118-121 (NKID), 185-192 (GRPNVGKS), 232-236 (DTAGI), and 297-300 (NKWD). The 86-residue stretch at 355 to 440 (QRVTTGIVNR…PIRLIFRPRQ (86 aa)) folds into the KH-like domain.

The protein belongs to the TRAFAC class TrmE-Era-EngA-EngB-Septin-like GTPase superfamily. EngA (Der) GTPase family. As to quaternary structure, associates with the 50S ribosomal subunit.

Functionally, GTPase that plays an essential role in the late steps of ribosome biogenesis. This chain is GTPase Der, found in Syntrophobacter fumaroxidans (strain DSM 10017 / MPOB).